A 168-amino-acid polypeptide reads, in one-letter code: Cell division inhibitor SulA (168 aa).

Positions 106–112 (ALQTGNY) are ftsZ binding. Residues 161–168 (KIHSSLYH) form a lon protease binding region.

This sequence belongs to the SulA family. As to quaternary structure, interacts with FtsZ. Post-translationally, is rapidly cleaved and degraded by the Lon protease once DNA damage is repaired.

Its function is as follows. Component of the SOS system and an inhibitor of cell division. Accumulation of SulA causes rapid cessation of cell division and the appearance of long, non-septate filaments. In the presence of GTP, binds a polymerization-competent form of FtsZ in a 1:1 ratio, thus inhibiting FtsZ polymerization and therefore preventing it from participating in the assembly of the Z ring. This mechanism prevents the premature segregation of damaged DNA to daughter cells during cell division. The sequence is that of Cell division inhibitor SulA from Serratia marcescens.